A 150-amino-acid chain; its full sequence is Male-specific protein scotti (150 aa).

The disordered stretch occupies residues 60-84; it reads PPMAVFPARGGPNGGPPRLRKKRSF. N-linked (GlcNAc...) asparagine glycosylation is present at N131.

It belongs to the male-specific scotti family.

Functionally, post-meiotically transcribed gene that has a role in late spermiogenesis; required for actin cone progression during spermatid individualization. The polypeptide is Male-specific protein scotti (Drosophila yakuba (Fruit fly)).